The sequence spans 1272 residues: AF4/FMR2 family member 2 (1272 aa).

Disordered regions lie at residues 93–183 (IPKN…LTQD) and 200–223 (PQIG…SSGE). The segment covering 97–107 (SVPQNPNNKNE) has biased composition (polar residues). Positions 151–160 (SKPEWSRDSH) are enriched in basic and acidic residues. Residues 161 to 183 (NPSTVLASQASGQPNKMQTLTQD) show a composition bias toward polar residues. The segment covering 212 to 223 (AKEDSNPKSSGE) has biased composition (basic and acidic residues). A Phosphoserine modification is found at serine 391. Disordered stretches follow at residues 418-491 (KAKP…KWQL), 535-687 (TNAS…DQEE), 779-829 (SLHA…PEKK), and 842-903 (PPCI…QDKN). Pro residues predominate over residues 426–438 (VNPPLATPQPPPA). The span at 439-452 (VQASGGSGSSSESE) shows a compositional bias: low complexity. Residue threonine 478 is modified to Phosphothreonine. Over residues 543-558 (EPKERPLLSLIREKAR) the composition is skewed to basic and acidic residues. Over residues 576–586 (STTSETVSQRT) the composition is skewed to polar residues. A compositionally biased stretch (basic and acidic residues) spans 616-629 (PKEKESVELHDPPR). Basic residues predominate over residues 630 to 640 (GRNKATAHKPA). Positions 818–829 (PTEVAEKIPEKK) are enriched in basic and acidic residues. Pro residues-rich tracts occupy residues 844-853 (CISPAPPHKP) and 874-883 (FPPPLSPLPE).

This sequence belongs to the AF4 family.

It localises to the nucleus speckle. In terms of biological role, RNA-binding protein. Might be involved in alternative splicing regulation through an interaction with G-quartet RNA structure. This is AF4/FMR2 family member 2 (AFF2) from Pongo pygmaeus (Bornean orangutan).